The following is a 380-amino-acid chain: Tubulin-like protein CetZ (380 aa).

GTP contacts are provided by residues 10–14 (QCGTK), 103–105 (GTG), E136, N163, and N181. The tract at residues 359–380 (PSLEATGSDDPEGFAEYREVSR) is disordered.

The protein belongs to the CetZ family.

It localises to the cytoplasm. Its function is as follows. Involved in cell shape control. The protein is Tubulin-like protein CetZ of Thermococcus kodakarensis (strain ATCC BAA-918 / JCM 12380 / KOD1) (Pyrococcus kodakaraensis (strain KOD1)).